The chain runs to 142 residues: ATP synthase epsilon chain, chloroplastic (142 aa).

It belongs to the ATPase epsilon chain family. F-type ATPases have 2 components, CF(1) - the catalytic core - and CF(0) - the membrane proton channel. CF(1) has five subunits: alpha(3), beta(3), gamma(1), delta(1), epsilon(1). CF(0) has three main subunits: a, b and c.

The protein localises to the plastid. Its subcellular location is the chloroplast thylakoid membrane. Produces ATP from ADP in the presence of a proton gradient across the membrane. The chain is ATP synthase epsilon chain, chloroplastic from Ostreococcus tauri.